A 243-amino-acid chain; its full sequence is Type III pantothenate kinase (243 aa).

6–13 contributes to the ATP binding site; sequence DIGNTVAK. Substrate is bound by residues Tyr-86 and 93–96; that span reads GYDR. Asp-95 acts as the Proton acceptor in catalysis. Asp-116 contacts K(+). ATP is bound at residue Thr-119. Thr-171 serves as a coordination point for substrate.

It belongs to the type III pantothenate kinase family. As to quaternary structure, homodimer. Requires NH4(+) as cofactor. The cofactor is K(+).

It is found in the cytoplasm. The catalysed reaction is (R)-pantothenate + ATP = (R)-4'-phosphopantothenate + ADP + H(+). It participates in cofactor biosynthesis; coenzyme A biosynthesis; CoA from (R)-pantothenate: step 1/5. Its function is as follows. Catalyzes the phosphorylation of pantothenate (Pan), the first step in CoA biosynthesis. The sequence is that of Type III pantothenate kinase from Bacteroides fragilis (strain ATCC 25285 / DSM 2151 / CCUG 4856 / JCM 11019 / LMG 10263 / NCTC 9343 / Onslow / VPI 2553 / EN-2).